The chain runs to 281 residues: N-methyltransferase tcpN (281 aa).

This sequence belongs to the methyltransferase superfamily. LaeA methyltransferase family.

Its pathway is secondary metabolite biosynthesis. Functionally, N-methyltransferase; part of the gene cluster that mediates the biosynthesis of an unusual class of epipolythiodioxopiperazines (ETPs) lacking the reactive thiol group important for toxicity. Firstly, L-tyrosine is prenylated by tcpD, before undergoing condensation with L-glycine in a reaction catalyzed by the NRPS tcpP leading to the diketopiperazine (DKP) backbone. Afterwards the alpha-carbon of tyrosine is oxidized by the cytochrome P450 tcpC to form a hydroxyl group. However, in contrast other ETP biosynthesis pathways studied so far, tcpC is not able to bishydroxylate the DKP at both alpha-carbon positions, but hydroxylates the alpha-carbon of the tyrosine part and the nitrogen of the glycine part. The next steps involve an alpha,beta-elimination reaction catalyzed by tcpI, a methylation by the methyltransferase tcpN the action of the four enzyme cascade tcpG/K/J/I. Due to a dysfunctional cytochrome P450 monooxygenase tcpC, the pathway leads to the biosynthesis of probable non-toxic metabolites lacking the reactive thiol group. The polypeptide is N-methyltransferase tcpN (Claviceps purpurea (strain 20.1) (Ergot fungus)).